A 294-amino-acid chain; its full sequence is tRNA pseudouridine synthase B (294 aa).

The Nucleophile role is filled by D39.

Belongs to the pseudouridine synthase TruB family. Type 1 subfamily.

The enzyme catalyses uridine(55) in tRNA = pseudouridine(55) in tRNA. Functionally, responsible for synthesis of pseudouridine from uracil-55 in the psi GC loop of transfer RNAs. The protein is tRNA pseudouridine synthase B of Streptococcus pyogenes serotype M28 (strain MGAS6180).